Here is a 493-residue protein sequence, read N- to C-terminus: Cobyric acid synthase (493 aa).

The GATase cobBQ-type domain maps to 252 to 440; sequence PVKIVVLRLR…IHGIFESDSL (189 aa). The active-site Nucleophile is the cysteine 333. Residue histidine 432 is part of the active site.

This sequence belongs to the CobB/CobQ family. CobQ subfamily.

The protein operates within cofactor biosynthesis; adenosylcobalamin biosynthesis. Functionally, catalyzes amidations at positions B, D, E, and G on adenosylcobyrinic A,C-diamide. NH(2) groups are provided by glutamine, and one molecule of ATP is hydrogenolyzed for each amidation. In Thermodesulfovibrio yellowstonii (strain ATCC 51303 / DSM 11347 / YP87), this protein is Cobyric acid synthase.